A 680-amino-acid polypeptide reads, in one-letter code: Protein terminal ear1 homolog (680 aa).

The RRM domain maps to 223–295 (SLVVLNSLPA…RRLVVEYTRP (73 aa)). Disordered stretches follow at residues 294-415 (RPSL…SWRG) and 593-680 (TEPV…GYTD). Low complexity-rich tracts occupy residues 328-340 (PSQS…SGSG) and 379-403 (SAAA…KQSQ). Residues 404-413 (KGGGGRGGSW) show a composition bias toward gly residues. 2 stretches are compositionally biased toward low complexity: residues 602 to 621 (SPAP…CAAS) and 634 to 648 (SSSG…SSNA). Basic and acidic residues predominate over residues 656-666 (HGETGGDRGDD).

As to expression, highly expressed in shoot apex and inflorescence apex, at intermediate levels in roots and at low levels in leaf blade and leaf sheath.

Its function is as follows. Probable RNA-binding protein. Involved in the regular timing (plastochron) of lateral organs formation. May regulate the rate of leaf initiation and the duration of vegetative phase. Seems to be redundant to the function of PLASTOCHRON1, but to act in an independent pathway. This is Protein terminal ear1 homolog (PLA2) from Oryza sativa subsp. indica (Rice).